The chain runs to 598 residues: MASHASSRIAKVLVANRGEIAVRVIRAARDARLPSVAVYAEPDAEAPHVRLADEAFALGGHTSAESYLDFGKILDAAAKSGANAIHPGYGFLAENADFAQAVIDAGLIWIGPSPQSIRDLGDKVTARHIAARAQAPLVPGTPDPVKNADEVVAFAKEHGVPIAIKAAFGGGGKGMKVARTLEEISELYESAVREATVAFGRGECFVERYLDKPRHVEAQVIADQHGNIVVAGTRDCSLQRRFQKLVEEAPAPFLTDAQRKEIHESAKRICKEAHYYGAGTVEYLVGQDGLISFLEVNTRLQVEHPVTEETTGIDLVLQQFKIANGEKLELIKDPIPCGHAIEFRINGEDAGRNFLPSPGPVSKFHPPTGPGVRLDSGVETGSVIGGQFDSMLAKLIVHGATRQEALARARRALDEFEVEGLATVIPFHRAVVSDPALIGDNNSFSVHTRWIETEWNNTIEPFIDNQPLDEEDTRPQQTVIVEVDGRRLEVSLPADLALANPAGCNPAGVIRKKPKPRKRGGHTGAATSGDAVTAPMQGTVVKVAVAEGQTVMTGDLVVVLEAMKMENPVTAHKDGIITGLAVEAGTAITQGTVLAEIK.

Residues 8 to 452 form the Biotin carboxylation domain; it reads RIAKVLVANR…SFSVHTRWIE (445 aa). Positions 127–324 constitute an ATP-grasp domain; the sequence is RHIAARAQAP…LVLQQFKIAN (198 aa). 155 to 216 serves as a coordination point for ATP; the sequence is AKEHGVPIAI…ERYLDKPRHV (62 aa). 3 residues coordinate Mg(2+): Glu282, Glu295, and Asn297. 3 residues coordinate Mn(2+): Glu282, Glu295, and Asn297. Residues 506–531 are disordered; sequence PAGVIRKKPKPRKRGGHTGAATSGDA. Basic residues predominate over residues 510 to 521; the sequence is IRKKPKPRKRGG. Positions 522 to 598 constitute a Biotinyl-binding domain; the sequence is HTGAATSGDA…TQGTVLAEIK (77 aa). An N6-biotinyllysine modification is found at Lys564.

As to quaternary structure, the biotin-dependent acyl-CoA carboxylase complex is composed of AccA3, which contains the biotin carboxylase (BC) and biotin carboxyl carrier protein (BCCP) domains, and an AccD protein, which contains the carboxyl transferase (CT) domain. The cofactor is Mg(2+). It depends on Mn(2+) as a cofactor. Biotin serves as cofactor.

The enzyme catalyses N(6)-biotinyl-L-lysyl-[protein] + hydrogencarbonate + ATP = N(6)-carboxybiotinyl-L-lysyl-[protein] + ADP + phosphate + H(+). Its pathway is lipid metabolism; fatty acid biosynthesis. It functions in the pathway lipid metabolism; mycolic acid biosynthesis. In terms of biological role, component of a biotin-dependent acyl-CoA carboxylase complex. This subunit catalyzes the ATP-dependent carboxylation of the biotin carried by the biotin carboxyl carrier (BCC) domain, resulting in the formation of carboxyl biotin. In Mycobacterium leprae (strain TN), this protein is Biotin-dependent acyl-coenzyme A carboxylase alpha3 subunit (bccA).